A 768-amino-acid chain; its full sequence is Gephyrin (768 aa).

The interval 14-166 (QIRVGVLTVS…LPGSKKGSQE (153 aa)) is MPT Mo-transferase. The interaction with GABARAP stretch occupies residues 153–348 (LIINLPGSKK…VDITKVARRH (196 aa)). Disordered stretches follow at residues 194-245 (DELE…DSSS) and 273-316 (TASL…ASRV). Over residues 200–212 (PSPPPPLSPPPTT) the composition is skewed to pro residues. Phosphoserine occurs at positions 201 and 207. A Phosphothreonine modification is found at T211. S213 is subject to Phosphoserine. C225 carries the S-palmitoyl cysteine lipid modification. Polar residues predominate over residues 274 to 299 (ASLSTTPSESPRAQATSRLSTASCPT). The residue at position 275 (S275) is a Phosphoserine. T278 and T279 each carry phosphothreonine. Phosphoserine is present on residues S281 and S283. The S-palmitoyl cysteine moiety is linked to residue C297. An MPT adenylyltransferase region spans residues 326–768 (SSKENILRAS…VVDVMVIGRL (443 aa)). At S337 the chain carries Phosphoserine.

This sequence in the N-terminal section; belongs to the MoaB/Mog family. It in the C-terminal section; belongs to the MoeA family. In terms of assembly, homotrimer, homodimer and homooligomer. Interacts with SRGAP2 (via SH3 domain). Interacts with GLRB. Interacts with GABARAP. Interacts with GABRA3. GABRA3 and GLRB occupy overlapping binding sites. Interacts with ARHGAP32; IQSEC3, INSYN1 and INSYN2A. It depends on Mg(2+) as a cofactor. Phosphorylated. In terms of processing, palmitoylated. Palmitoylation is stimulated by GABA type A receptors activity. Palmitoylation by ZDHHC12 regulates clustering at synapses. As to expression, expressed in tissues including spinal cord, brain, liver, kidney and lung.

The protein localises to the postsynaptic cell membrane. It localises to the cell membrane. It is found in the cytoplasm. The protein resides in the cytosol. Its subcellular location is the cytoskeleton. The protein localises to the cell projection. It localises to the dendrite. It is found in the postsynaptic density. It catalyses the reaction molybdopterin + ATP + H(+) = adenylyl-molybdopterin + diphosphate. It carries out the reaction adenylyl-molybdopterin + molybdate = Mo-molybdopterin + AMP + H(+). It functions in the pathway cofactor biosynthesis; molybdopterin biosynthesis. Inhibited by copper and tungsten. In terms of biological role, microtubule-associated protein involved in membrane protein-cytoskeleton interactions. It is thought to anchor the inhibitory glycine receptor (GLYR) to subsynaptic microtubules. Acts as a major instructive molecule at inhibitory synapses, where it also clusters GABA type A receptors. Its function is as follows. Also has a catalytic activity and catalyzes two steps in the biosynthesis of the molybdenum cofactor. In the first step, molybdopterin is adenylated. Subsequently, molybdate is inserted into adenylated molybdopterin and AMP is released. In Rattus norvegicus (Rat), this protein is Gephyrin (Gphn).